Reading from the N-terminus, the 272-residue chain is Glutamate racemase (272 aa).

Substrate is bound by residues 9–10 (DS) and 41–42 (YG). The active-site Proton donor/acceptor is cysteine 73. 74 to 75 (NT) contributes to the substrate binding site. The Proton donor/acceptor role is filled by cysteine 183. 184–185 (TH) contacts substrate.

Belongs to the aspartate/glutamate racemases family.

It carries out the reaction L-glutamate = D-glutamate. It functions in the pathway cell wall biogenesis; peptidoglycan biosynthesis. Its function is as follows. Provides the (R)-glutamate required for cell wall biosynthesis. This Shewanella sp. (strain MR-7) protein is Glutamate racemase.